A 199-amino-acid polypeptide reads, in one-letter code: NAD(P)H dehydrogenase (quinone) (199 aa).

Residues 4 to 190 enclose the Flavodoxin-like domain; sequence VLVLYYSAYG…AGARYQGRMI (187 aa). FMN is bound by residues 10 to 15 and 78 to 80; these read SAYGHI and TRF. Tyr-12 contacts NAD(+). Trp-98 provides a ligand contact to substrate. FMN is bound by residues 113-119 and His-134; that span reads SSATQHG.

The protein belongs to the WrbA family. FMN is required as a cofactor.

The enzyme catalyses a quinone + NADH + H(+) = a quinol + NAD(+). The catalysed reaction is a quinone + NADPH + H(+) = a quinol + NADP(+). The protein is NAD(P)H dehydrogenase (quinone) of Nitrobacter winogradskyi (strain ATCC 25391 / DSM 10237 / CIP 104748 / NCIMB 11846 / Nb-255).